The chain runs to 96 residues: Putative toxin Y4kP (96 aa).

The protein belongs to the RelE toxin family.

Toxic component of a type II toxin-antitoxin (TA) system. The polypeptide is Putative toxin Y4kP (Sinorhizobium fredii (strain NBRC 101917 / NGR234)).